The primary structure comprises 704 residues: DNA ligase (704 aa).

Residues 44–48 (DYEYD), 93–94 (SI), and glutamate 125 contribute to the NAD(+) site. Residue lysine 127 is the N6-AMP-lysine intermediate of the active site. NAD(+) is bound by residues arginine 148, glutamate 184, lysine 300, and lysine 324. Zn(2+)-binding residues include cysteine 418, cysteine 421, cysteine 436, and cysteine 442. The BRCT domain maps to 625–704 (IISSNISGKI…DEWEHLINEK (80 aa)).

Belongs to the NAD-dependent DNA ligase family. LigA subfamily. Mg(2+) serves as cofactor. It depends on Mn(2+) as a cofactor.

The catalysed reaction is NAD(+) + (deoxyribonucleotide)n-3'-hydroxyl + 5'-phospho-(deoxyribonucleotide)m = (deoxyribonucleotide)n+m + AMP + beta-nicotinamide D-nucleotide.. In terms of biological role, DNA ligase that catalyzes the formation of phosphodiester linkages between 5'-phosphoryl and 3'-hydroxyl groups in double-stranded DNA using NAD as a coenzyme and as the energy source for the reaction. It is essential for DNA replication and repair of damaged DNA. The protein is DNA ligase of Pelobacter propionicus (strain DSM 2379 / NBRC 103807 / OttBd1).